Reading from the N-terminus, the 119-residue chain is Large ribosomal subunit protein uL18 (119 aa).

The disordered stretch occupies residues 1–25 (MITKIDKNKVRKKRHARVRSKISGT). Positions 9–20 (KVRKKRHARVRS) are enriched in basic residues.

Belongs to the universal ribosomal protein uL18 family. In terms of assembly, part of the 50S ribosomal subunit; part of the 5S rRNA/L5/L18/L25 subcomplex. Contacts the 5S and 23S rRNAs.

In terms of biological role, this is one of the proteins that bind and probably mediate the attachment of the 5S RNA into the large ribosomal subunit, where it forms part of the central protuberance. This Listeria monocytogenes serotype 4b (strain CLIP80459) protein is Large ribosomal subunit protein uL18.